A 309-amino-acid chain; its full sequence is Coproporphyrin III ferrochelatase (309 aa).

Fe-coproporphyrin III contacts are provided by residues Y12, T14, R29, 45-46 (RY), S53, and Y124. Residues H182 and E263 each coordinate Fe(2+).

It belongs to the ferrochelatase family. As to quaternary structure, monomer.

Its subcellular location is the cytoplasm. The catalysed reaction is Fe-coproporphyrin III + 2 H(+) = coproporphyrin III + Fe(2+). Its pathway is porphyrin-containing compound metabolism; protoheme biosynthesis. Its function is as follows. Involved in coproporphyrin-dependent heme b biosynthesis. Catalyzes the insertion of ferrous iron into coproporphyrin III to form Fe-coproporphyrin III. The protein is Coproporphyrin III ferrochelatase of Listeria monocytogenes serovar 1/2a (strain ATCC BAA-679 / EGD-e).